The chain runs to 359 residues: Heme A synthase (359 aa).

Helical transmembrane passes span 8–28, 94–114, 124–144, 159–179, and 215–235; these read IMSIWLIVSTLLLLLMIVVGG, LLGRITGIIIIIPFLIFYYLK, LLLITCLVIIQGFMGWYMVKS, GHLLLAVVIYHQLIAELLIII, and IIIFLLYTQIMFGALVAGLDA. Residue H274 coordinates heme. A run of 3 helical transmembrane segments spans residues 276 to 296, 303 to 323, and 328 to 348; these read WFGILISCLIICYAIWLIILN, MGMVAACLVLVQVTTGIITLV, and ILAALTHQVGAILILTTFLFI. H334 is a heme binding site.

The protein belongs to the COX15/CtaA family. Type 2 subfamily. In terms of assembly, interacts with CtaB. Requires heme b as cofactor.

It localises to the cell membrane. The catalysed reaction is Fe(II)-heme o + 2 A + H2O = Fe(II)-heme a + 2 AH2. Its pathway is porphyrin-containing compound metabolism; heme A biosynthesis; heme A from heme O: step 1/1. Catalyzes the conversion of heme O to heme A by two successive hydroxylations of the methyl group at C8. The first hydroxylation forms heme I, the second hydroxylation results in an unstable dihydroxymethyl group, which spontaneously dehydrates, resulting in the formyl group of heme A. The polypeptide is Heme A synthase (Orientia tsutsugamushi (strain Ikeda) (Rickettsia tsutsugamushi)).